We begin with the raw amino-acid sequence, 263 residues long: S-adenosylmethionine decarboxylase proenzyme (263 aa).

The active-site Schiff-base intermediate with substrate; via pyruvic acid is the serine 113. Pyruvic acid (Ser); by autocatalysis is present on serine 113. Histidine 118 functions as the Proton acceptor; for processing activity in the catalytic mechanism. Residue cysteine 141 is the Proton donor; for catalytic activity of the active site.

This sequence belongs to the prokaryotic AdoMetDC family. Type 2 subfamily. Heterooctamer of four alpha and four beta chains arranged as a tetramer of alpha/beta heterodimers. It depends on pyruvate as a cofactor. Post-translationally, is synthesized initially as an inactive proenzyme. Formation of the active enzyme involves a self-maturation process in which the active site pyruvoyl group is generated from an internal serine residue via an autocatalytic post-translational modification. Two non-identical subunits are generated from the proenzyme in this reaction, and the pyruvate is formed at the N-terminus of the alpha chain, which is derived from the carboxyl end of the proenzyme. The post-translation cleavage follows an unusual pathway, termed non-hydrolytic serinolysis, in which the side chain hydroxyl group of the serine supplies its oxygen atom to form the C-terminus of the beta chain, while the remainder of the serine residue undergoes an oxidative deamination to produce ammonia and the pyruvoyl group blocking the N-terminus of the alpha chain.

It catalyses the reaction S-adenosyl-L-methionine + H(+) = S-adenosyl 3-(methylsulfanyl)propylamine + CO2. It participates in amine and polyamine biosynthesis; S-adenosylmethioninamine biosynthesis; S-adenosylmethioninamine from S-adenosyl-L-methionine: step 1/1. In terms of biological role, catalyzes the decarboxylation of S-adenosylmethionine to S-adenosylmethioninamine (dcAdoMet), the propylamine donor required for the synthesis of the polyamines spermine and spermidine from the diamine putrescine. This Marinobacter nauticus (strain ATCC 700491 / DSM 11845 / VT8) (Marinobacter aquaeolei) protein is S-adenosylmethionine decarboxylase proenzyme.